The following is a 311-amino-acid chain: Solute carrier family 25 member 48 (311 aa).

Solcar repeat units follow at residues 3-86 (SFQL…TQRF), 101-205 (RTLS…LSEW), and 214-301 (PSPC…SLQA). The next 6 membrane-spanning stretches (helical) occupy residues 9-29 (FAAGWIGGAASVIVGHPLDTV), 61-81 (GMSFPLASIAVYNSVVFGVFS), 107-127 (LLASMVAGVVSVGLGGPVDLI), 189-209 (VPGYCLYFIPYVFLSEWITPE), 217-237 (CAVWLAGGMAGAISWGTATPM), and 277-295 (ITVNAVRGFPMSAAMFLGY).

This sequence belongs to the mitochondrial carrier (TC 2.A.29) family.

The protein resides in the mitochondrion inner membrane. The chain is Solute carrier family 25 member 48 (SLC25A48) from Homo sapiens (Human).